The chain runs to 335 residues: UPF0353 protein Mvan_2751 (335 aa).

2 consecutive transmembrane segments (helical) span residues Trp-18–Met-38 and Leu-67–Thr-87. The VWFA domain occupies Val-98–Leu-294. A helical transmembrane segment spans residues Val-309–Ile-329.

The protein belongs to the UPF0353 family.

It localises to the cell membrane. The chain is UPF0353 protein Mvan_2751 from Mycolicibacterium vanbaalenii (strain DSM 7251 / JCM 13017 / BCRC 16820 / KCTC 9966 / NRRL B-24157 / PYR-1) (Mycobacterium vanbaalenii).